Here is a 376-residue protein sequence, read N- to C-terminus: Chaperone protein DnaJ (376 aa).

Residues aspartate 5–glycine 70 form the J domain. The CR-type zinc finger occupies glycine 137–valine 215. Residues cysteine 150, cysteine 153, cysteine 167, cysteine 170, cysteine 189, cysteine 192, cysteine 203, and cysteine 206 each contribute to the Zn(2+) site. CXXCXGXG motif repeat units follow at residues cysteine 150–glycine 157, cysteine 167–glycine 174, cysteine 189–glycine 196, and cysteine 203–glycine 210.

It belongs to the DnaJ family. In terms of assembly, homodimer. Zn(2+) serves as cofactor.

The protein localises to the cytoplasm. Functionally, participates actively in the response to hyperosmotic and heat shock by preventing the aggregation of stress-denatured proteins and by disaggregating proteins, also in an autonomous, DnaK-independent fashion. Unfolded proteins bind initially to DnaJ; upon interaction with the DnaJ-bound protein, DnaK hydrolyzes its bound ATP, resulting in the formation of a stable complex. GrpE releases ADP from DnaK; ATP binding to DnaK triggers the release of the substrate protein, thus completing the reaction cycle. Several rounds of ATP-dependent interactions between DnaJ, DnaK and GrpE are required for fully efficient folding. Also involved, together with DnaK and GrpE, in the DNA replication of plasmids through activation of initiation proteins. The polypeptide is Chaperone protein DnaJ (Nitratidesulfovibrio vulgaris (strain ATCC 29579 / DSM 644 / CCUG 34227 / NCIMB 8303 / VKM B-1760 / Hildenborough) (Desulfovibrio vulgaris)).